We begin with the raw amino-acid sequence, 619 residues long: Hypermethylated in cancer 2 protein (619 aa).

Positions 46–109 (CDVIIMVENS…IYTGKLLPSD (64 aa)) constitute a BTB domain. A phosphoserine mark is found at serine 166, serine 169, and serine 197. 2 disordered regions span residues 180–293 (DVRK…VGNS) and 307–426 (MDVE…GHTG). Over residues 214 to 228 (LGLGGPAGGEMGLGG) the composition is skewed to gly residues. Residues 247–249 (DLS) are binding to CtBP. A compositionally biased stretch (polar residues) spans 281–293 (APTSTSALPVGNS). Residues 337-357 (KKDWNKKEPVAGSPFDRRETG) are compositionally biased toward basic and acidic residues. Residues serine 349 and serine 416 each carry the phosphoserine modification. C2H2-type zinc fingers lie at residues 446–468 (YVCIPCAKGFPSSEQLNAHVETH), 509–531 (FKCSVCEKTYKDPATLRQHEKTH), 537–559 (FPCNICGKMFTQRGTMTRHMRSH), 565–587 (FACDECGMRFTRQYRLTEHMRVH), and 593–615 (YECQLCGGKFTQQRNLISHLRMH).

It belongs to the krueppel C2H2-type zinc-finger protein family. Hic subfamily. As to quaternary structure, self-associates. Interacts with HIC1.

It is found in the nucleus. Its function is as follows. Transcriptional repressor. The chain is Hypermethylated in cancer 2 protein (Hic2) from Mus musculus (Mouse).